The sequence spans 197 residues: Peptide deformylase (197 aa).

Cysteine 106 and histidine 148 together coordinate Fe cation. The active site involves glutamate 149. Histidine 152 provides a ligand contact to Fe cation.

It belongs to the polypeptide deformylase family. Fe(2+) is required as a cofactor.

It catalyses the reaction N-terminal N-formyl-L-methionyl-[peptide] + H2O = N-terminal L-methionyl-[peptide] + formate. Removes the formyl group from the N-terminal Met of newly synthesized proteins. Requires at least a dipeptide for an efficient rate of reaction. N-terminal L-methionine is a prerequisite for activity but the enzyme has broad specificity at other positions. The sequence is that of Peptide deformylase from Mycobacterium marinum (strain ATCC BAA-535 / M).